We begin with the raw amino-acid sequence, 210 residues long: Flagellar transcriptional regulator FlhC (210 aa).

Residues C144, C147, C164, and C167 each coordinate Zn(2+).

Belongs to the FlhC family. In terms of assembly, heterohexamer composed of two FlhC and four FlhD subunits. Each FlhC binds a FlhD dimer, forming a heterotrimer, and a hexamer assembles by dimerization of two heterotrimers. Zn(2+) serves as cofactor.

The protein resides in the cytoplasm. Functions in complex with FlhD as a master transcriptional regulator that regulates transcription of several flagellar and non-flagellar operons by binding to their promoter region. Activates expression of class 2 flagellar genes, including fliA, which is a flagellum-specific sigma factor that turns on the class 3 genes. Also regulates genes whose products function in a variety of physiological pathways. The chain is Flagellar transcriptional regulator FlhC from Cupriavidus pinatubonensis (strain JMP 134 / LMG 1197) (Cupriavidus necator (strain JMP 134)).